A 348-amino-acid chain; its full sequence is CCN family member 2 (348 aa).

The first 25 residues, 1 to 25 (MLASVAGPISLALVLLALCTRPAMG), serve as a signal peptide directing secretion. The IGFBP N-terminal domain occupies 26 to 97 (QDCSAQCQCA…NRKIGVCTAK (72 aa)). Cystine bridges form between C28–C53, C32–C55, C34–C56, C42–C59, C67–C81, and C73–C94. A VWFC domain is found at 100–166 (APCVFGGSVY…GKCCEEWVCD (67 aa)). Residues 197-242 (NCLVQTTEWSACSKTCGMGISTRVTNDNTFCRLEKQSRLCMVRPCE) enclose the TSP type-1 domain. Residues 246–348 (EENIKKGKKC…YYRKMYGDMA (103 aa)) form a heparin-binding region. 5 disulfides stabilise this stretch: C255-C292, C272-C306, C283-C322, C286-C324, and C291-C328. The CTCK domain maps to 255–329 (CIRTPKIAKP…KTCACHYNCP (75 aa)).

Belongs to the CCN family. As to quaternary structure, monomer. Interacts with TSKU. In terms of tissue distribution, testis, spleen, kidney, lung, heart, and brain (lowest level in testis and highest in lung).

It is found in the secreted. It localises to the extracellular space. The protein resides in the extracellular matrix. In terms of biological role, major connective tissue mitoattractant secreted by vascular endothelial cells. Promotes proliferation and differentiation of chondrocytes. Is involved in the stimulation of osteoblast differentiation and has a critical role in osteogenesis. Mediates heparin- and divalent cation-dependent cell adhesion in many cell types including fibroblasts, myofibroblasts, endothelial and epithelial cells. Enhances fibroblast growth factor-induced DNA synthesis. The sequence is that of CCN family member 2 from Mus musculus (Mouse).